Reading from the N-terminus, the 287-residue chain is Putative DNA-3-methyladenine glycosylase YfjP (287 aa).

The active-site Proton acceptor is Asp242.

Belongs to the alkylbase DNA glycosidase AlkA family.

It catalyses the reaction Hydrolysis of alkylated DNA, releasing 3-methyladenine, 3-methylguanine, 7-methylguanine and 7-methyladenine.. In terms of biological role, hydrolysis of the deoxyribose N-glycosidic bond to excise 3-methyladenine, 3-methylguanine, 7-methylguanine, O2-methylthymine, and O2-methylcytosine from the damaged DNA polymer formed by alkylation lesions. The chain is Putative DNA-3-methyladenine glycosylase YfjP (yfjP) from Bacillus subtilis (strain 168).